The primary structure comprises 27 residues: Cupiennin-3a (27 aa).

Glu-27 is subject to Glutamic acid 1-amide.

As to expression, expressed by the venom gland.

It is found in the secreted. The polypeptide is Cupiennin-3a (Cupiennius salei (American wandering spider)).